Here is a 199-residue protein sequence, read N- to C-terminus: MNSSILTGIFGGSFDPPHEGHSEILKSFFLEVPDCKEVFVIPNRQNPLKEEKISLSENILEMLNLFVSEFSQSIRILDLELKRSGPSYTIQTIQELKTIYPNRKFVLLIGEDNYSNFHKWKDWEKILTEVETIFVFRRFSKEVPLNSHLNSLFEFKFLENPLIPVTSTDLRKSFFQSKVPNLISKKVLDYILKNKLYSK.

It belongs to the NadD family.

It catalyses the reaction nicotinate beta-D-ribonucleotide + ATP + H(+) = deamido-NAD(+) + diphosphate. It functions in the pathway cofactor biosynthesis; NAD(+) biosynthesis; deamido-NAD(+) from nicotinate D-ribonucleotide: step 1/1. Catalyzes the reversible adenylation of nicotinate mononucleotide (NaMN) to nicotinic acid adenine dinucleotide (NaAD). This is Probable nicotinate-nucleotide adenylyltransferase from Leptospira interrogans serogroup Icterohaemorrhagiae serovar copenhageni (strain Fiocruz L1-130).